The sequence spans 134 residues: MVMDLRTWDDITVHQAENSVFIWEVPNPLYFKMYXVEDPLYTHTRIYHIQIRFNHNLRRALNLHKAFLNFQVWTESIRASGTTYLNRFRHLVMLYLDRLGVIGLNNVIRAVSWATDRSYVNYVLENHEIKFKIY.

This sequence belongs to the geminiviridae replication enhancer protein family. As to quaternary structure, homooligomer. Interacts with the replication-associated protein (REP). Interacts with host proliferating cell nuclear antigen (PCNA). Interacts with host retinoblastoma-related protein 1 (RBR1), and may thereby deregulate the host cell cycle. Oligomerization and interaction with PCNA are necessary for optimal replication enhancement.

Its function is as follows. Increases viral DNA accumulation. Enhances infectivity and symptom expression. The chain is Replication enhancer protein from Squash leaf curl virus (SLCV).